A 562-amino-acid chain; its full sequence is NAD-dependent malic enzyme (562 aa).

Y101 (proton donor) is an active-site residue. R154 serves as a coordination point for NAD(+). K172 serves as the catalytic Proton acceptor. 3 residues coordinate a divalent metal cation: E243, D244, and D267. Positions 267 and 415 each coordinate NAD(+).

Belongs to the malic enzymes family. In terms of assembly, homotetramer. The cofactor is Mg(2+). Mn(2+) is required as a cofactor.

It carries out the reaction (S)-malate + NAD(+) = pyruvate + CO2 + NADH. The enzyme catalyses oxaloacetate + H(+) = pyruvate + CO2. The sequence is that of NAD-dependent malic enzyme from Shewanella halifaxensis (strain HAW-EB4).